The primary structure comprises 81 residues: UPF0410 protein YwzA (81 aa).

Transmembrane regions (helical) follow at residues M1–V21, G27–L47, and G56–L76.

It belongs to the UPF0410 family.

The protein localises to the cell membrane. The chain is UPF0410 protein YwzA (ywzA) from Bacillus subtilis (strain 168).